The chain runs to 478 residues: Ankyrin repeat and BTB/POZ domain-containing protein 1 (478 aa).

2 ANK repeats span residues 1 to 31 (MDTSDLFASCRKGDVGRVRYLLEQRDVEVNV) and 35 to 64 (WDSTPLYYACLCGHEELVRYLLANGARCEA). BTB domains are found at residues 115 to 182 (SDVV…DIGV) and 272 to 346 (PDIC…ELPP). Positions 451-477 (VQTYSAIEEAQQRLRALEDLLVSIGLD) form a coiled coil.

It is found in the cytoplasm. Functionally, may act as a mediator of the PTEN growth-suppressive signaling pathway. May play a role in developmental processes. This is Ankyrin repeat and BTB/POZ domain-containing protein 1 from Mus musculus (Mouse).